The sequence spans 273 residues: Transposon Tn7 transposition protein TnsA (273 aa).

Catalysis depends on residues Glu63 and Glu73. A DNA-binding region (H-T-H motif) is located at residues 90–108 (TRQIAIDSGIKHPVIRGVD). The active site involves Asp114. 3 residues coordinate Mg(2+): Asp114, Gln130, and Val131. Residue Lys132 is part of the active site.

In terms of assembly, heteromer with TnsB. Interacts with TnsC (via C-terminus); this interaction allows TnsA to bind donor DNA. It depends on Mg(2+) as a cofactor. Mn(2+) serves as cofactor.

Required for Tn7 transposition. Forms the transposase, together with TnsB. TnsA executes the 5'-DNA strand breakage reaction. TnsABC and TnsD promote high-frequency insertion of Tn7 into a specific target site known as att-Tn7 whereas TnsABC and TnsE promote low-frequency insertion into many different sites. This is Transposon Tn7 transposition protein TnsA from Escherichia coli.